The sequence spans 326 residues: GTP 3',8-cyclase (326 aa).

A Radical SAM core domain is found at 5–227 (GHGRTVDYLR…ALGREGASPS (223 aa)). GTP is bound at residue arginine 14. [4Fe-4S] cluster-binding residues include cysteine 21 and cysteine 25. Residue tyrosine 27 participates in S-adenosyl-L-methionine binding. Cysteine 28 is a binding site for [4Fe-4S] cluster. Residue arginine 64 coordinates GTP. Glycine 68 contacts S-adenosyl-L-methionine. Threonine 95 serves as a coordination point for GTP. Residue serine 119 coordinates S-adenosyl-L-methionine. Residue lysine 155 participates in GTP binding. Methionine 189 provides a ligand contact to S-adenosyl-L-methionine. Positions 250 and 253 each coordinate [4Fe-4S] cluster. 255 to 257 (RIR) contacts GTP. Position 267 (cysteine 267) interacts with [4Fe-4S] cluster.

It belongs to the radical SAM superfamily. MoaA family. As to quaternary structure, monomer and homodimer. It depends on [4Fe-4S] cluster as a cofactor.

The enzyme catalyses GTP + AH2 + S-adenosyl-L-methionine = (8S)-3',8-cyclo-7,8-dihydroguanosine 5'-triphosphate + 5'-deoxyadenosine + L-methionine + A + H(+). The protein operates within cofactor biosynthesis; molybdopterin biosynthesis. Functionally, catalyzes the cyclization of GTP to (8S)-3',8-cyclo-7,8-dihydroguanosine 5'-triphosphate. The sequence is that of GTP 3',8-cyclase from Sulfurovum sp. (strain NBC37-1).